An 861-amino-acid chain; its full sequence is Leucine--tRNA ligase (861 aa).

A 'HIGH' region motif is present at residues 42 to 52; it reads PYPSGRIHMGH. Residues 623–627 carry the 'KMSKS' region motif; the sequence is KMSKS. Residue K626 coordinates ATP.

It belongs to the class-I aminoacyl-tRNA synthetase family.

The protein localises to the cytoplasm. The enzyme catalyses tRNA(Leu) + L-leucine + ATP = L-leucyl-tRNA(Leu) + AMP + diphosphate. This Caulobacter vibrioides (strain ATCC 19089 / CIP 103742 / CB 15) (Caulobacter crescentus) protein is Leucine--tRNA ligase.